The sequence spans 539 residues: MEKLSETTPNGTSPRTFALNHSRPRSSFKGCSRISDYELLGKLGEGTFGEVHRARLRKTGALVALKKIIMHHEKDGFPITALREIKLLKLLSHKNILRLEDMAIEHPTRQTDKRKKPIVYMATPYMDHDLSGLLDNPSVQFKEPQIKCYMLQLLEGLRYLHDSRILHRDMKAANLLINNKGILQIADFGLARHYDGRTPESGVPMGEGKRDYTGLVVTRWYRPPELLLQLRQYTPAIDVWGVGCVFGEMLYGKPILAGESDAAQLDIIWDLMGSPNEENMPRWKSLPGADHLTPRPRTGNLETRFRQYGSGAVSLLKELLRLDWRTRINAVDALQHPWFKMQPLPLEPHEIPTYEESHELDRRKFHDRKAALPPAPKGGTVGVGPDANGATAGFNSNEPYGNGRNGVNGGRYRNGPDDRRPAWQRERGAGLPPRPPPNNDDADFRERGPPRARGPPGPRGPDVDTYIPAYNRDDPGRRRDDRPPPPRDDRPPPRDDRRRRNSREDRRFDRDRGTMSRSRSPRHDRSRDRDRPDHNGYRR.

The span at 1-15 shows a compositional bias: polar residues; it reads MEKLSETTPNGTSPR. A disordered region spans residues 1–27; the sequence is MEKLSETTPNGTSPRTFALNHSRPRSS. The 303-residue stretch at 37-339 folds into the Protein kinase domain; the sequence is YELLGKLGEG…AVDALQHPWF (303 aa). ATP is bound by residues 43–51 and Lys66; that span reads LGEGTFGEV. The active-site Proton acceptor is the Asp169. A disordered region spans residues 370 to 539; it reads AALPPAPKGG…DRPDHNGYRR (170 aa). 3 stretches are compositionally biased toward basic and acidic residues: residues 414–428, 471–514, and 521–539; these read NGPDDRRPAWQRERG, NRDD…DRGT, and PRHDRSRDRDRPDHNGYRR.

Belongs to the protein kinase superfamily. CMGC Ser/Thr protein kinase family. CDC2/CDKX subfamily.

The protein resides in the nucleus. The catalysed reaction is L-seryl-[protein] + ATP = O-phospho-L-seryl-[protein] + ADP + H(+). The enzyme catalyses L-threonyl-[protein] + ATP = O-phospho-L-threonyl-[protein] + ADP + H(+). It catalyses the reaction [DNA-directed RNA polymerase] + ATP = phospho-[DNA-directed RNA polymerase] + ADP + H(+). Serine/threonine-protein kinase involved in transcription regulation. Phosphorylates the UBC2/RAD6 ubiquitin-conjugating enzyme (E2), leading to monoubiquitination of histone H2B and the silencing of telomeric-associated genes. Also required for histone H3 methylation. Necessary for the recovery from pheromone-induced growth arrest in the cell cycle G1 phase. This is Serine/threonine-protein kinase BUR1 (BUR1) from Gibberella zeae (strain ATCC MYA-4620 / CBS 123657 / FGSC 9075 / NRRL 31084 / PH-1) (Wheat head blight fungus).